We begin with the raw amino-acid sequence, 185 residues long: Translation initiation factor IF-3 (185 aa).

Belongs to the IF-3 family. Monomer.

The protein localises to the cytoplasm. IF-3 binds to the 30S ribosomal subunit and shifts the equilibrium between 70S ribosomes and their 50S and 30S subunits in favor of the free subunits, thus enhancing the availability of 30S subunits on which protein synthesis initiation begins. The sequence is that of Translation initiation factor IF-3 from Coxiella burnetii (strain RSA 493 / Nine Mile phase I).